The sequence spans 292 residues: Trimeric intracellular cation channel type B (292 aa).

Residues 1-16 (MEYPWDDLTLAFSRTS) lie on the Lumenal side of the membrane. A helical membrane pass occupies residues 17 to 34 (MFPFFDIAHYLVSVMALK). At 35–47 (QRPGAVAAAWNNP) the chain is on the cytoplasmic side. The chain crosses the membrane as a helical span at residues 48–69 (LASWLSAMLHCFGGGILSCMLL). Residues 70–82 (AESPLKFLTNHTN) lie on the Lumenal side of the membrane. Residues 83-100 (ILLASSIWYIVFFCPRDL) traverse the membrane as a helical segment. Topologically, residues 101–103 (VSQ) are cytoplasmic. A helical transmembrane segment spans residues 104–122 (GYSYQPIQFLAAGMKEVTR). A 1,2-diacyl-sn-glycero-3-phospho-(1D-myo-inositol-4,5-bisphosphate) contacts are provided by K118 and R122. The Lumenal segment spans residues 123–140 (TWKIVGGVSDANSYYRNA). The chain crosses the membrane as a helical span at residues 141-158 (WIVMIVVGWARGAGGAVV). Residues 159–178 (TACEQLLKGDWKPEGDEWLK) lie on the Cytoplasmic side of the membrane. A helical membrane pass occupies residues 179–195 (MSFPCKITLLGSIMFTF). Residues 196–206 (QHTRHLAISKH) are Lumenal-facing. Residues 207–225 (DLMFLYTIFLVTIKVTMMM) traverse the membrane as a helical segment. At 226 to 292 (TKDTAVTLTP…GAKRHAKKED (67 aa)) the chain is on the cytoplasmic side. A disordered region spans residues 248–292 (RQQQQFSSSEKKTEVKPSSNGSASSASKRGAEPSGGAKRHAKKED). Residues 265-274 (SSNGSASSAS) are compositionally biased toward low complexity.

This sequence belongs to the TMEM38 family. As to quaternary structure, homotrimer; conformation seems to be controled by binding to diacylglycerol (DAG). As to expression, widely expressed.

Its subcellular location is the endoplasmic reticulum membrane. The enzyme catalyses K(+)(in) = K(+)(out). With respect to regulation, channel activity is activated by increased cytosolic Ca(2+) levels and blocked by luminal high Ca(2+) levels. Its function is as follows. Intracellular monovalent cation channel required for maintenance of rapid intracellular calcium release. Acts as a potassium counter-ion channel that functions in synchronization with calcium release from intracellular stores. Activated by increased cytosolic Ca(2+) levels. The protein is Trimeric intracellular cation channel type B (Tmem38b) of Mus musculus (Mouse).